Consider the following 398-residue polypeptide: MLRLYVLVMGVSAFTLQPAAHTGAARSCRFRGRHYKREFRLEGEPVALRCPQVPYWLWASVSPRINLTWHKNDSARTVPGEEETRMWAQDGALWLLPALQEDSGTYVCTTRNASYCDKMSIELRVFENTDAFLPFISYPQILTLSTSGVLVCPDLSEFTRDKTDVKIQWYKDSLLLDKDNEKFLSVRGTTHLLVHDVALEDAGYYRCVLTFAHEGQQYNITRSIELRIKKKKEETIPVIISPLKTISASLGSRLTIPCKVFLGTGTPLTTMLWWTANDTHIESAYPGGRVTEGPRQEYSENNENYIEVPLIFDPVTREDLHMDFKCVVHNTLSFQTLRTTVKEASSTFSWGIVLAPLSLAFLVLGGIWMHRRCKHRTGKADGLTVLWPHHQDFQSYPK.

A signal peptide spans 1–13 (MLRLYVLVMGVSA). Residues 14–343 (FTLQPAAHTG…FQTLRTTVKE (330 aa)) are Extracellular-facing. Ig-like C2-type domains follow at residues 18 to 124 (PAAH…IELR), 134 to 223 (PFIS…ITRS), and 237 to 349 (PVII…STFS). 3 disulfides stabilise this stretch: Cys28–Cys116, Cys50–Cys108, and Cys152–Cys207. N-linked (GlcNAc...) asparagine glycans are attached at residues Asn66, Asn72, and Asn112. Residues Asn219 and Asn277 are each glycosylated (N-linked (GlcNAc...) asparagine). Cys258 and Cys326 are joined by a disulfide. The segment at 329 to 343 (HNTLSFQTLRTTVKE) is contains proteolytic cleavage site. The chain crosses the membrane as a helical span at residues 344–369 (ASSTFSWGIVLAPLSLAFLVLGGIWM). Topologically, residues 370-398 (HRRCKHRTGKADGLTVLWPHHQDFQSYPK) are cytoplasmic.

The protein belongs to the interleukin-1 receptor family. In terms of assembly, associates with IL1RAP to form a non-signaling interleukin-1 receptor complex. A soluble form (sIL1R2) can also be produced by proteolytic cleavage at the cell surface (shedding) involving a metalloproteinase; hovever, several sIL1R2 forms ranging from 45 and 60 kDa are reported.

It localises to the secreted. The protein resides in the cell membrane. Non-signaling receptor for IL1A, IL1B and IL1RN. Reduces IL1B activities. Serves as a decoy receptor by competitive binding to IL1B and preventing its binding to IL1R1. Also modulates cellular response through non-signaling association with IL1RAP after binding to IL1B. IL1R2 (membrane and secreted forms) preferentially binds IL1B and poorly IL1A and IL1RN. The secreted IL1R2 recruits secreted IL1RAP with high affinity; this complex formation may be the dominant mechanism for neutralization of IL1B by secreted/soluble receptors. The chain is Interleukin-1 receptor type 2 (IL1R2) from Homo sapiens (Human).